Reading from the N-terminus, the 202-residue chain is D-alanyl-D-alanine dipeptidase (202 aa).

Residues H116 and D123 each contribute to the Zn(2+) site. E181 serves as the catalytic Proton donor/acceptor. H184 contacts Zn(2+).

This sequence belongs to the peptidase M15D family. Requires Zn(2+) as cofactor.

It catalyses the reaction D-alanyl-D-alanine + H2O = 2 D-alanine. Functionally, catalyzes hydrolysis of the D-alanyl-D-alanine dipeptide. This Enterococcus faecalis (strain ATCC 700802 / V583) protein is D-alanyl-D-alanine dipeptidase (vanXB).